The chain runs to 126 residues: Probable cystatin-16 (126 aa).

The N-terminal stretch at M1–A20 is a signal peptide. Residues C84 and C94 are joined by a disulfide bond. N106 carries an N-linked (GlcNAc...) asparagine glycan.

This sequence belongs to the cystatin family.

It is found in the secreted. The protein is Probable cystatin-16 of Bos taurus (Bovine).